The chain runs to 227 residues: Cytochrome c oxidase subunit 2 (227 aa).

Residues 1 to 14 (MALPFQLGFQDATS) lie on the Mitochondrial intermembrane side of the membrane. Residues 15 to 45 (PIMEELLHFHDHTLMIVFMISSLVLYLISSM) form a helical membrane-spanning segment. Residues 46 to 59 (LTTRLTHTSTMDAQ) are Mitochondrial matrix-facing. Residues 60–87 (EVETIWTILPAIILITIALPSLRILYMM) traverse the membrane as a helical segment. Over 88-227 (DEINNPSMTI…CFEKWSTSML (140 aa)) the chain is Mitochondrial intermembrane. Positions 161, 196, 198, 200, 204, and 207 each coordinate Cu cation. Glutamate 198 lines the Mg(2+) pocket.

Belongs to the cytochrome c oxidase subunit 2 family. In terms of assembly, component of the cytochrome c oxidase (complex IV, CIV), a multisubunit enzyme composed of 14 subunits. The complex is composed of a catalytic core of 3 subunits MT-CO1, MT-CO2 and MT-CO3, encoded in the mitochondrial DNA, and 11 supernumerary subunits COX4I, COX5A, COX5B, COX6A, COX6B, COX6C, COX7A, COX7B, COX7C, COX8 and NDUFA4, which are encoded in the nuclear genome. The complex exists as a monomer or a dimer and forms supercomplexes (SCs) in the inner mitochondrial membrane with NADH-ubiquinone oxidoreductase (complex I, CI) and ubiquinol-cytochrome c oxidoreductase (cytochrome b-c1 complex, complex III, CIII), resulting in different assemblies (supercomplex SCI(1)III(2)IV(1) and megacomplex MCI(2)III(2)IV(2)). Found in a complex with TMEM177, COA6, COX18, COX20, SCO1 and SCO2. Interacts with TMEM177 in a COX20-dependent manner. Interacts with COX20. Interacts with COX16. Cu cation serves as cofactor.

Its subcellular location is the mitochondrion inner membrane. It catalyses the reaction 4 Fe(II)-[cytochrome c] + O2 + 8 H(+)(in) = 4 Fe(III)-[cytochrome c] + 2 H2O + 4 H(+)(out). In terms of biological role, component of the cytochrome c oxidase, the last enzyme in the mitochondrial electron transport chain which drives oxidative phosphorylation. The respiratory chain contains 3 multisubunit complexes succinate dehydrogenase (complex II, CII), ubiquinol-cytochrome c oxidoreductase (cytochrome b-c1 complex, complex III, CIII) and cytochrome c oxidase (complex IV, CIV), that cooperate to transfer electrons derived from NADH and succinate to molecular oxygen, creating an electrochemical gradient over the inner membrane that drives transmembrane transport and the ATP synthase. Cytochrome c oxidase is the component of the respiratory chain that catalyzes the reduction of oxygen to water. Electrons originating from reduced cytochrome c in the intermembrane space (IMS) are transferred via the dinuclear copper A center (CU(A)) of subunit 2 and heme A of subunit 1 to the active site in subunit 1, a binuclear center (BNC) formed by heme A3 and copper B (CU(B)). The BNC reduces molecular oxygen to 2 water molecules using 4 electrons from cytochrome c in the IMS and 4 protons from the mitochondrial matrix. The protein is Cytochrome c oxidase subunit 2 (MT-CO2) of Phyllostomus hastatus (Greater spear-nosed bat).